Reading from the N-terminus, the 147-residue chain is Mitochondrial import receptor subunit TOM20 homolog (147 aa).

Topologically, residues 1 to 3 are mitochondrial intermembrane; sequence MVV. Residues 4-26 form a helical membrane-spanning segment; sequence VGKTSAIAAGVCGALFLGYCIYF. Topologically, residues 27–147 are cytoplasmic; the sequence is DRKRRSDPNF…AQNLAEDDVE (121 aa).

Belongs to the Tom20 family. Forms part of the preprotein translocase complex of the outer mitochondrial membrane (TOM complex). Interacts with tom22.

Its subcellular location is the mitochondrion outer membrane. Its function is as follows. Central component of the receptor complex responsible for the recognition and translocation of cytosolically synthesized mitochondrial preproteins. Together with tom22 functions as the transit peptide receptor at the surface of the mitochondrion outer membrane and facilitates the movement of preproteins into the tom40 translocation pore. The protein is Mitochondrial import receptor subunit TOM20 homolog (tomm20) of Xenopus tropicalis (Western clawed frog).